A 369-amino-acid chain; its full sequence is Phosphate acyltransferase (369 aa).

The segment at 342 to 369 (ASRAPNSQTAGGERAAAVPQSAQLRMDS) is disordered.

The protein belongs to the PlsX family. As to quaternary structure, homodimer. Probably interacts with PlsY.

Its subcellular location is the cytoplasm. The catalysed reaction is a fatty acyl-[ACP] + phosphate = an acyl phosphate + holo-[ACP]. Its pathway is lipid metabolism; phospholipid metabolism. Its function is as follows. Catalyzes the reversible formation of acyl-phosphate (acyl-PO(4)) from acyl-[acyl-carrier-protein] (acyl-ACP). This enzyme utilizes acyl-ACP as fatty acyl donor, but not acyl-CoA. The sequence is that of Phosphate acyltransferase from Methylocella silvestris (strain DSM 15510 / CIP 108128 / LMG 27833 / NCIMB 13906 / BL2).